A 213-amino-acid polypeptide reads, in one-letter code: ATP synthase peripheral stalk subunit OSCP, mitochondrial (213 aa).

A mitochondrion-targeting transit peptide spans 1–23 (MAAPATSVLSRQVRSFSTSVVRP). Residues 5–23 (ATSVLSRQVRSFSTSVVRP) carry the SIFI-degron motif. N6-acetyllysine is present on residues Lys-60, Lys-70, and Lys-73. At Lys-90 the chain carries N6-succinyllysine. Residues Lys-100 and Lys-158 each carry the N6-acetyllysine; alternate modification. N6-succinyllysine; alternate is present on residues Lys-100 and Lys-158. Residues Lys-176 and Lys-192 each carry the N6-acetyllysine modification. Lys-199 bears the N6-succinyllysine mark.

The protein belongs to the ATPase delta chain family. As to quaternary structure, component of the ATP synthase complex composed at least of ATP5F1A/subunit alpha, ATP5F1B/subunit beta, ATP5MC1/subunit c (homooctomer), MT-ATP6/subunit a, MT-ATP8/subunit 8, ATP5ME/subunit e, ATP5MF/subunit f, ATP5MG/subunit g, ATP5MK/subunit k, ATP5MJ/subunit j, ATP5F1C/subunit gamma, ATP5F1D/subunit delta, ATP5F1E/subunit epsilon, ATP5PF/subunit F6, ATP5PB/subunit b, ATP5PD/subunit d, ATP5PO/subunit OSCP. ATP synthase complex consists of a soluble F(1) head domain (subunits alpha(3) and beta(3)) - the catalytic core - and a membrane F(0) domain - the membrane proton channel (subunits c, a, 8, e, f, g, k and j). These two domains are linked by a central stalk (subunits gamma, delta, and epsilon) rotating inside the F1 region and a stationary peripheral stalk (subunits F6, b, d, and OSCP). Post-translationally, in response to mitochondrial stress, the precursor protein is ubiquitinated by the SIFI complex in the cytoplasm before mitochondrial import, leading to its degradation. Within the SIFI complex, UBR4 initiates ubiquitin chain that are further elongated or branched by KCMF1. Expressed by the principal cells of the epididymis. Detected in flagella of epididymal sperm (at protein level).

Its subcellular location is the mitochondrion. The protein resides in the mitochondrion inner membrane. In terms of biological role, subunit OSCP, of the mitochondrial membrane ATP synthase complex (F(1)F(0) ATP synthase or Complex V) that produces ATP from ADP in the presence of a proton gradient across the membrane which is generated by electron transport complexes of the respiratory chain. ATP synthase complex consist of a soluble F(1) head domain - the catalytic core - and a membrane F(1) domain - the membrane proton channel. These two domains are linked by a central stalk rotating inside the F(1) region and a stationary peripheral stalk. During catalysis, ATP synthesis in the catalytic domain of F(1) is coupled via a rotary mechanism of the central stalk subunits to proton translocation. In vivo, can only synthesize ATP although its ATP hydrolase activity can be activated artificially in vitro. Part of the complex F(0) domain. Part of the complex F(0) domain and the peripheric stalk, which acts as a stator to hold the catalytic alpha(3)beta(3) subcomplex and subunit a/ATP6 static relative to the rotary elements. The chain is ATP synthase peripheral stalk subunit OSCP, mitochondrial from Rattus norvegicus (Rat).